Here is a 115-residue protein sequence, read N- to C-terminus: Anamorsin homolog 1 (115 aa).

Residues 30–115 form a disordered region; sequence VKEATKGEDC…KVKLNLTDDI (86 aa). [2Fe-2S] cluster contacts are provided by Cys39, Cys46, Cys49, and Cys51. The fe-S binding site A stretch occupies residues 39–51; sequence CTTRRRACKNCTC. 4 residues coordinate [4Fe-4S] cluster: Cys77, Cys80, Cys88, and Cys91. Short sequence motifs (cx2C motif) lie at residues 77–80 and 88–91; these read CGNC and CATC. The interval 77–91 is fe-S binding site B; it reads CGNCAKGDAFRCATC.

The protein belongs to the anamorsin family. Monomer. Requires [2Fe-2S] cluster as cofactor. [4Fe-4S] cluster serves as cofactor.

Its subcellular location is the cytoplasm. It is found in the mitochondrion intermembrane space. In terms of biological role, component of the cytosolic iron-sulfur (Fe-S) protein assembly (CIA) machinery. Required for the maturation of extramitochondrial Fe-S proteins. Part of an electron transfer chain functioning in an early step of cytosolic Fe-S biogenesis, facilitating the de novo assembly of a [4Fe-4S] cluster on the cytosolic Fe-S scaffold complex. Electrons are transferred from NADPH via a FAD- and FMN-containing diflavin oxidoreductase. Together with the diflavin oxidoreductase, also required for the assembly of the diferric tyrosyl radical cofactor of ribonucleotide reductase (RNR), probably by providing electrons for reduction during radical cofactor maturation in the catalytic small subunit. The chain is Anamorsin homolog 1 from Trypanosoma cruzi (strain CL Brener).